The chain runs to 190 residues: dCTP deaminase, dUMP-forming (190 aa).

Residues 101-106 (KSSLGR), Asp119, 127-129 (TLE), Gln148, Tyr162, and Gln174 contribute to the dCTP site. The active-site Proton donor/acceptor is Glu129. Residues 163-190 (GSSQVGSKYQGQRGPTPSKSYQNFVKSN) form a disordered region.

It belongs to the dCTP deaminase family. In terms of assembly, homotrimer.

The catalysed reaction is dCTP + 2 H2O = dUMP + NH4(+) + diphosphate. The protein operates within pyrimidine metabolism; dUMP biosynthesis; dUMP from dCTP: step 1/1. Bifunctional enzyme that catalyzes both the deamination of dCTP to dUTP and the hydrolysis of dUTP to dUMP without releasing the toxic dUTP intermediate. The sequence is that of dCTP deaminase, dUMP-forming from Mycolicibacterium gilvum (strain PYR-GCK) (Mycobacterium gilvum (strain PYR-GCK)).